The following is a 484-amino-acid chain: tRNA sulfurtransferase (484 aa).

A THUMP domain is found at 63–167; sequence EAFGERLACI…NEQLYLVDKR (105 aa). ATP is bound by residues 185–186, Lys-267, Gly-289, and Gln-298; that span reads LI. An intrachain disulfide couples Cys-346 to Cys-458. Residues 406-484 form the Rhodanese domain; sequence ISADEVIIDV…GYSNVKVYRP (79 aa). The Cysteine persulfide intermediate role is filled by Cys-458.

This sequence belongs to the ThiI family.

The protein localises to the cytoplasm. The enzyme catalyses [ThiI sulfur-carrier protein]-S-sulfanyl-L-cysteine + a uridine in tRNA + 2 reduced [2Fe-2S]-[ferredoxin] + ATP + H(+) = [ThiI sulfur-carrier protein]-L-cysteine + a 4-thiouridine in tRNA + 2 oxidized [2Fe-2S]-[ferredoxin] + AMP + diphosphate. The catalysed reaction is [ThiS sulfur-carrier protein]-C-terminal Gly-Gly-AMP + S-sulfanyl-L-cysteinyl-[cysteine desulfurase] + AH2 = [ThiS sulfur-carrier protein]-C-terminal-Gly-aminoethanethioate + L-cysteinyl-[cysteine desulfurase] + A + AMP + 2 H(+). Its pathway is cofactor biosynthesis; thiamine diphosphate biosynthesis. In terms of biological role, catalyzes the ATP-dependent transfer of a sulfur to tRNA to produce 4-thiouridine in position 8 of tRNAs, which functions as a near-UV photosensor. Also catalyzes the transfer of sulfur to the sulfur carrier protein ThiS, forming ThiS-thiocarboxylate. This is a step in the synthesis of thiazole, in the thiamine biosynthesis pathway. The sulfur is donated as persulfide by IscS. The chain is tRNA sulfurtransferase from Shewanella piezotolerans (strain WP3 / JCM 13877).